A 32-amino-acid chain; its full sequence is Growth hormone-related protein 4 (32 aa).

The cysteines at positions 4 and 11 are disulfide-linked.

Belongs to the somatotropin/prolactin family. Glycosylated. Placental basal zone cells.

The protein resides in the secreted. The sequence is that of Growth hormone-related protein 4 from Rattus norvegicus (Rat).